We begin with the raw amino-acid sequence, 443 residues long: Chorionicgonadotropic hormone-like protein (443 aa).

Residues 263-286 (RCAGRPCPRRHRRPCNASKSHRPM) show a composition bias toward basic residues. Residues 263-292 (RCAGRPCPRRHRRPCNASKSHRPMRMQQRD) are disordered.

It to mammalian CGHB.

It localises to the secreted. The protein localises to the cell wall. Functionally, cell wall protein that resembles the beta subunit of human chorionic gonadotropin. Stimulates growth and change in morphology. The protein is Chorionicgonadotropic hormone-like protein (xcg) of Stenotrophomonas maltophilia (Pseudomonas maltophilia).